The primary structure comprises 389 residues: Equilibrative nucleotide transporter 8 (389 aa).

10 helical membrane-spanning segments follow: residues 19–39 (VAYV…NALI), 57–77 (TFTV…MTWN), 87–107 (NLGF…DWVW), 119–139 (LMVG…GSLI), 150–170 (MQAI…LRIA), 187–207 (HSYF…CNVL), 238–258 (WPAS…PGFI), 266–286 (LLQS…DFVG), 331–351 (VVVL…VLMI), and 367–387 (IFMV…GWLW).

This sequence belongs to the SLC29A/ENT transporter (TC 2.A.57) family. As to expression, expressed in stems, flowers and siliques.

It is found in the cell membrane. In terms of biological role, may be involved in nucleoside transport. The polypeptide is Equilibrative nucleotide transporter 8 (ETN8) (Arabidopsis thaliana (Mouse-ear cress)).